The following is a 711-amino-acid chain: Ferric/cupric reductase transmembrane component 2 (711 aa).

The signal sequence occupies residues 1-23; the sequence is MHWTSILSAILLFCLSGARASPA. The Extracellular segment spans residues 24 to 164; the sequence is KTVIRNKVPL…GFYANLDVGN (141 aa). 4 N-linked (GlcNAc...) asparagine glycosylation sites follow: asparagine 85, asparagine 108, asparagine 120, and asparagine 134. A helical membrane pass occupies residues 165–185; the sequence is IYGGIICAYFVAIMAFAGVLH. Over 186-235 the chain is Cytoplasmic; the sequence is CMNYTPFKTVLLKQKLVGYVRGYLTLPTIGSKHASDFSYFRIFTGYLPTR. A helical membrane pass occupies residues 236–256; it reads LEGIIILGYLVLHTVFLAYGY. Topologically, residues 257–280 are extracellular; it reads EYDPENIIFKSRRVQVARYVADRS. Residues 280-414 enclose the Ferric oxidoreductase domain; it reads SGVLAFAHFP…SGIEWIYTAI (135 aa). A helical membrane pass occupies residues 281 to 301; sequence GVLAFAHFPLIVLFAGRNNFL. Over 302–317 the chain is Cytoplasmic; sequence EYISGVKYTSFIMFHK. Residues histidine 316 and histidine 330 each coordinate heme. Residues 318-340 form a helical membrane-spanning segment; it reads WLGRMMFLDAMIHGSAYTSYTVA. A glycan (N-linked (GlcNAc...) asparagine) is linked at asparagine 341. Residues 341–353 are Extracellular-facing; that stretch reads NKTWATSKNRLYW. A helical membrane pass occupies residues 354–374; sequence QFGVAALCLAGTMVFFSFAVF. The Cytoplasmic segment spans residues 375–377; that stretch reads RKY. The chain crosses the membrane as a helical span at residues 378–398; it reads FYEAFLFLHIVLGAMFFYACW. Heme contacts are provided by histidine 386 and histidine 400. Residues 399–400 are Extracellular-facing; it reads EH. Residues 401–423 form a helical membrane-spanning segment; that stretch reads VVSLSGIEWIYTAIAIWIVDRII. An FAD-binding FR-type domain is found at 415 to 534; the sequence is AIWIVDRIIR…EGPYGSSSPV (120 aa). Residues 424-711 lie on the Cytoplasmic side of the membrane; it reads RIIKASYFGF…IEYFEEYQCW (288 aa). 479–485 contributes to the FAD binding site; that stretch reads HPFTVLD. NADP(+)-binding positions include 526 to 529 and 677 to 678; these read GPYG and CG.

It belongs to the ferric reductase (FRE) family. It depends on FAD as a cofactor. Requires heme as cofactor.

The protein resides in the cell membrane. It carries out the reaction 2 a Fe(II)-siderophore + NADP(+) + H(+) = 2 a Fe(III)-siderophore + NADPH. Metalloreductase responsible for reducing extracellular iron and copper prior to import. Catalyzes the reductive uptake of Fe(3+)-salts and Fe(3+) bound to catecholate or hydroxamate siderophores. Fe(3+) is reduced to Fe(2+), which then dissociates from the siderophore and can be imported by the high-affinity Fe(2+) transport complex in the plasma membrane. Also participates in Cu(2+) reduction and Cu(+) uptake. This Saccharomyces cerevisiae (strain ATCC 204508 / S288c) (Baker's yeast) protein is Ferric/cupric reductase transmembrane component 2 (FRE2).